The following is a 118-amino-acid chain: Ribosome-binding factor A (118 aa).

Belongs to the RbfA family. Monomer. Binds 30S ribosomal subunits, but not 50S ribosomal subunits or 70S ribosomes.

It localises to the cytoplasm. In terms of biological role, one of several proteins that assist in the late maturation steps of the functional core of the 30S ribosomal subunit. Associates with free 30S ribosomal subunits (but not with 30S subunits that are part of 70S ribosomes or polysomes). Required for efficient processing of 16S rRNA. May interact with the 5'-terminal helix region of 16S rRNA. This chain is Ribosome-binding factor A, found in Bacillus cereus (strain AH187).